We begin with the raw amino-acid sequence, 747 residues long: AMP deaminase 1 (747 aa).

Thr81 bears the Phosphothreonine mark. The residue at position 85 (Ser85) is a Phosphoserine. Residue Tyr216 is modified to Phosphotyrosine. Zn(2+) contacts are provided by His303 and His305. Substrate contacts are provided by residues His305 and Lys374–Tyr379. Residue Ser441 is modified to Phosphoserine. His572 lines the Zn(2+) pocket. Glu575 serves as a coordination point for substrate. The active-site Proton acceptor is His594. Zn(2+) is bound at residue Asp649. Position 650–653 (Asp650–Gln653) interacts with substrate.

This sequence belongs to the metallo-dependent hydrolases superfamily. Adenosine and AMP deaminases family. In terms of assembly, homotetramer. Zn(2+) is required as a cofactor.

The catalysed reaction is AMP + H2O + H(+) = IMP + NH4(+). Its pathway is purine metabolism; IMP biosynthesis via salvage pathway; IMP from AMP: step 1/1. Its function is as follows. AMP deaminase plays a critical role in energy metabolism. The chain is AMP deaminase 1 from Rattus norvegicus (Rat).